The following is a 422-amino-acid chain: Serine--tRNA ligase (422 aa).

229 to 231 is a binding site for L-serine; the sequence is TAE. ATP is bound by residues 260–262 and valine 276; that span reads RRE. Glutamate 283 serves as a coordination point for L-serine. 349–352 is an ATP binding site; it reads EVTS. L-serine is bound at residue threonine 384.

Belongs to the class-II aminoacyl-tRNA synthetase family. Type-1 seryl-tRNA synthetase subfamily. Homodimer. The tRNA molecule binds across the dimer.

The protein resides in the cytoplasm. The catalysed reaction is tRNA(Ser) + L-serine + ATP = L-seryl-tRNA(Ser) + AMP + diphosphate + H(+). It catalyses the reaction tRNA(Sec) + L-serine + ATP = L-seryl-tRNA(Sec) + AMP + diphosphate + H(+). Its pathway is aminoacyl-tRNA biosynthesis; selenocysteinyl-tRNA(Sec) biosynthesis; L-seryl-tRNA(Sec) from L-serine and tRNA(Sec): step 1/1. Its function is as follows. Catalyzes the attachment of serine to tRNA(Ser). Is also able to aminoacylate tRNA(Sec) with serine, to form the misacylated tRNA L-seryl-tRNA(Sec), which will be further converted into selenocysteinyl-tRNA(Sec). The protein is Serine--tRNA ligase of Treponema denticola (strain ATCC 35405 / DSM 14222 / CIP 103919 / JCM 8153 / KCTC 15104).